A 65-amino-acid chain; its full sequence is Conotoxin TsMRCL-04 (65 aa).

Residues 1–20 (MRCLPVFIILLLLIPSAASA) form the signal peptide. Positions 21 to 48 (AQPETKDDAALASFYDNAKRTLQRHWAK) are excised as a propeptide. Residue glutamate 63 is modified to Glutamic acid 1-amide.

It belongs to the conotoxin T superfamily. Contains 2 disulfide bonds that can be either 'C1-C3, C2-C4' or 'C1-C4, C2-C3', since these disulfide connectivities have been observed for conotoxins with cysteine framework V (for examples, see AC P0DQQ7 and AC P81755). Expressed by the venom duct.

It localises to the secreted. The sequence is that of Conotoxin TsMRCL-04 from Conus tessulatus (Tessellate cone).